A 199-amino-acid polypeptide reads, in one-letter code: MASDFWLIAGLGNPGKKYEDTRHNMGFMTADVLAERWTVNFADHKGLAMLGKSVMNLDGRTVKFFLAKPLTYMNDSGNAVASISAYYQIEPDHIVVIHDDMDLEFGRIKVKAGGSAGGHNGIKSIDRSLGTPKYARVRMGVGHSKRGANAHDNTVNWVLGGFGPDQRKQLPEFLADGADAAEDIIFHGLAKTQEKFNGR.

TRNA is bound at residue Y18. The active-site Proton acceptor is H23. Positions 72, 74, and 120 each coordinate tRNA.

Belongs to the PTH family. In terms of assembly, monomer.

It is found in the cytoplasm. It carries out the reaction an N-acyl-L-alpha-aminoacyl-tRNA + H2O = an N-acyl-L-amino acid + a tRNA + H(+). Its function is as follows. Hydrolyzes ribosome-free peptidyl-tRNAs (with 1 or more amino acids incorporated), which drop off the ribosome during protein synthesis, or as a result of ribosome stalling. In terms of biological role, catalyzes the release of premature peptidyl moieties from peptidyl-tRNA molecules trapped in stalled 50S ribosomal subunits, and thus maintains levels of free tRNAs and 50S ribosomes. This Bifidobacterium longum (strain DJO10A) protein is Peptidyl-tRNA hydrolase.